Here is an 825-residue protein sequence, read N- to C-terminus: AP-3 complex subunit delta (825 aa).

HEAT repeat units lie at residues 131–168 (GLAR…QYPE), 169–205 (AISA…RAPK), 207–243 (YLEF…YEPR), 244–281 (LVKK…LVGH), 285–323 (DKLA…THPS), 324–360 (LVSA…KENI), 363–400 (IVKT…KSTY), 469–513 (EKRT…LAHR), 515–547 (LLQA…LWVE), and 548–584 (KIVS…IVNT). The disordered stretch occupies residues 787–825 (STNQGSMGDIVLETKSPIRVEKKKSKKKKKKKEKTSGKE). Residues 807–819 (EKKKSKKKKKKKE) show a composition bias toward basic residues.

The protein belongs to the adaptor complexes large subunit family. As to quaternary structure, adaptor protein complex 3 (AP-3) is a heterotetramer composed of 2 large adaptins (apl5 and apl6), a medium adaptin (apm3) and a small adaptin (aps3).

The protein localises to the golgi apparatus. The protein resides in the cytoplasmic vesicle. Its subcellular location is the clathrin-coated vesicle membrane. In terms of biological role, part of the AP-3 complex, an adaptor-related complex which is not clathrin-associated. The complex is associated with the Golgi region as well as more peripheral structures. It facilitates the budding of vesicles from the Golgi membrane and may be directly involved in trafficking to the vacuole. This chain is AP-3 complex subunit delta (apl5), found in Schizosaccharomyces pombe (strain 972 / ATCC 24843) (Fission yeast).